The chain runs to 248 residues: DNA repair protein RecO (248 aa).

It belongs to the RecO family.

In terms of biological role, involved in DNA repair and RecF pathway recombination. This is DNA repair protein RecO from Thermoanaerobacter sp. (strain X514).